Here is a 209-residue protein sequence, read N- to C-terminus: Large ribosomal subunit protein uL3 (209 aa).

Residues 117-142 (FQGPIKRHGQSRGPETHGSRYHRRPG) form a disordered region.

It belongs to the universal ribosomal protein uL3 family. Part of the 50S ribosomal subunit. Forms a cluster with proteins L14 and L19.

Its function is as follows. One of the primary rRNA binding proteins, it binds directly near the 3'-end of the 23S rRNA, where it nucleates assembly of the 50S subunit. This Clostridioides difficile (strain 630) (Peptoclostridium difficile) protein is Large ribosomal subunit protein uL3.